The primary structure comprises 329 residues: Src kinase-associated phosphoprotein 2 (329 aa).

The disordered stretch occupies residues 58 to 95 (YAEDSEEEEDWDSNEGGSLQSERTDKDEEACEGAQQAP). The span at 61–70 (DSEEEEDWDS) shows a compositional bias: acidic residues. The 104-residue stretch at 104–207 (SVFKAGYLEK…WVKQIDFVLK (104 aa)) folds into the PH domain. A disordered region spans residues 240 to 263 (EDMPSPPPKVEPVSKHPPPTPAVD). Over residues 243–260 (PSPPPKVEPVSKHPPPTP) the composition is skewed to pro residues. The SH3 domain maps to 267–328 (DYANYYQGLW…PKDYLMELYA (62 aa)).

It belongs to the SKAP family. Post-translationally, phosphorylated on tyrosines.

The protein localises to the cytoplasm. Functionally, may be involved in B-cell and macrophage adhesion processes. May play a role in src signaling pathway. This Takifugu rubripes (Japanese pufferfish) protein is Src kinase-associated phosphoprotein 2 (skap2).